The primary structure comprises 182 residues: Large ribosomal subunit protein uL6 (182 aa).

This sequence belongs to the universal ribosomal protein uL6 family. In terms of assembly, part of the 50S ribosomal subunit.

Functionally, this protein binds to the 23S rRNA, and is important in its secondary structure. It is located near the subunit interface in the base of the L7/L12 stalk, and near the tRNA binding site of the peptidyltransferase center. This is Large ribosomal subunit protein uL6 from Methanococcus vannielii.